A 493-amino-acid polypeptide reads, in one-letter code: Voltage-gated potassium channel regulatory subunit KCNF1 (493 aa).

Topologically, residues methionine 1 to valine 183 are cytoplasmic. A helical membrane pass occupies residues valine 184–isoleucine 204. The Extracellular segment spans residues proline 205–glutamate 223. Residues asparagine 224 to serine 244 traverse the membrane as a helical segment. Residues proline 245 to histidine 249 are Cytoplasmic-facing. A helical transmembrane segment spans residues phenylalanine 250–leucine 270. Topologically, residues threonine 271–valine 289 are extracellular. The helical; Voltage-sensor transmembrane segment at glutamine 290–leucine 310 threads the bilayer. At glutamine 311–leucine 324 the chain is on the cytoplasmic side. A helical transmembrane segment spans residues glycine 325–methionine 345. The Extracellular segment spans residues glutamate 346 to isoleucine 357. An intramembrane region (pore-forming) is located at residues proline 358 to proline 378. Positions threonine 370 to aspartate 375 match the Selectivity filter motif. Residues lysine 379 to leucine 385 are Extracellular-facing. Residues asparagine 386 to isoleucine 406 form a helical membrane-spanning segment. Over asparagine 407–lysine 493 the chain is Cytoplasmic. A disordered region spans residues asparagine 433 to lysine 468.

This sequence belongs to the potassium channel family. F (TC 1.A.1.2) subfamily. Kv5.1/KCNF1 sub-subfamily. As to quaternary structure, heterotetramer with KCNB1 or KCNB2. In terms of tissue distribution, expressed in brain namely in the piriform cortex, olfactory tubercle, and medial habenular nucleus. Also expressed in the medial amygdaloid nuclei and the lateral amygdaloid area.

It is found in the cell membrane. Its function is as follows. Regulatory alpha-subunit of the voltage-gated potassium (Kv) channel which, when coassembled with KCNB1 or KCNB2, can modulate their expression and their gating kinetics by acting on deactivation upon repolarization and inactivation during maintained depolarization. Accelerates inactivation but has relatively little effect on deactivation. Coexpression with KCNB1 or KCNB2 markedly slows inactivation. Each modulatory subunit has its own specific properties of regulation, and can lead to extensive inhibitions, to large changes in kinetics, and/or to large shifts in the voltage dependencies of the inactivation process. The gating kinetics depends on the nature and stoichiometry of the associated regulatory sunbunit. Fails to produce a potassium current when expressed alone. The polypeptide is Voltage-gated potassium channel regulatory subunit KCNF1 (Rattus norvegicus (Rat)).